The following is a 336-amino-acid chain: Phosphonate dehydrogenase (336 aa).

NAD(+) contacts are provided by residues 155–156 (AI), glutamate 175, 235–237 (PCR), and aspartate 261. Residue arginine 237 is part of the active site. The active site involves glutamate 266. Histidine 292 serves as the catalytic Proton donor. NAD(+) is bound at residue 292 to 295 (HIGS).

In terms of assembly, homodimer.

It catalyses the reaction phosphonate + NAD(+) + H2O = phosphate + NADH + H(+). Inhibited by NaCl, NADH and sulfite. In terms of biological role, catalyzes phosphite (phosphonate) oxidation. This chain is Phosphonate dehydrogenase (ptxD), found in Stutzerimonas stutzeri (Pseudomonas stutzeri).